The primary structure comprises 307 residues: Glutaminase (307 aa).

Substrate contacts are provided by serine 67, asparagine 117, glutamate 161, asparagine 168, tyrosine 192, tyrosine 243, and valine 261.

The protein belongs to the glutaminase family. As to quaternary structure, homotetramer.

It carries out the reaction L-glutamine + H2O = L-glutamate + NH4(+). The sequence is that of Glutaminase from Streptomyces coelicolor (strain ATCC BAA-471 / A3(2) / M145).